Reading from the N-terminus, the 407-residue chain is M protein, serotype 2.1 (407 aa).

The N-terminal stretch at 1 to 41 is a signal peptide; that stretch reads MARKDTNKQYSLRKLKTGTASVAVAVAVLGAGFANQTTVKA. Residues 81 to 94 are 2 X 7 AA tandem repeats; that stretch reads VEEEHKKVEEEHKK. 4 stretches are compositionally biased toward basic and acidic residues: residues 83–144, 152–229, 237–264, and 272–288; these read EEHK…KRYQ, QLEK…EKQI, LSRDLEASRAAKKDLEAEHQKLKEEKQI, and LSRDLEASREAKKKVEA. Residues 83 to 289 are disordered; that stretch reads EEHKKVEEEH…REAKKKVEAD (207 aa). C repeat units follow at residues 151–185, 186–220, 221–255, and 256–290; these read QQLEKEKQISEASRKSLRRDLEASRAAKKDLEAEH, QKLKEEKQISEASRKSLRRDLEASRAAKKDLEAEH, QKLKEEKQISEASRQGLSRDLEASRAAKKDLEAEH, and QKLKEEKQISEASRQGLSRDLEASREAKKKVEADL. 4 D repeats span residues 323–328, 329–334, 337–342, and 344–349; these read AKLEAE, AKALKE, AKQAEE, and AKLKGN. The disordered stretch occupies residues 344 to 382; it reads AKLKGNQTPNAKVAPQANRSRSAMTQQKRTLPSTGETAN. A compositionally biased stretch (polar residues) spans 360 to 380; it reads ANRSRSAMTQQKRTLPSTGET. An LPXTG sorting signal motif is present at residues 374-378; sequence LPSTG. The residue at position 377 (threonine 377) is a Pentaglycyl murein peptidoglycan amidated threonine. The propeptide at 378-407 is removed by sortase; sequence GETANPFFTAAAATVMVSAGMLALKRKEEN.

This sequence belongs to the M protein family.

The protein localises to the secreted. Its subcellular location is the cell wall. Its function is as follows. This protein is one of the different antigenic serotypes of protein M. Protein M is closely associated with virulence of the bacterium and can render the organism resistant to phagocytosis. In Streptococcus pyogenes, this protein is M protein, serotype 2.1 (emmL2.1).